The following is a 578-amino-acid chain: Acyl-CoA synthetase ACTT5 (578 aa).

Residue 211-222 coordinates AMP; that stretch reads RLTTSGTTGLPK. Residues 472 to 551 form an AMP-binding region; that stretch reads ELEAALLQAK…DEIPRSPTGK (80 aa).

The protein belongs to the ATP-dependent AMP-binding enzyme family.

It participates in mycotoxin biosynthesis. Functionally, acyl-CoA synthetase; part of the gene clusters that mediate the biosynthesis of the host-selective toxins (HSTs) ACT-toxins responsible for brown spot of tangerine disease by the tangerine pathotype which affects tangerines and mandarins. ACT-toxins consist of three moieties, 9,10-epoxy-8-hydroxy-9-methyl-decatrienoic acid (EDA), valine and a polyketide. ACT-toxin I is toxic to both citrus and pear; toxin II the 5''-deoxy derivative of ACT-toxin I, is highly toxic to pear and slightly toxic to citrus. On cellular level, ACT-toxins affect plasma membrane of susceptible cells and cause a sudden increase in loss of K(+) after a few minutes of toxin treatment. The acyl-CoA ligase ACTT1, the hydrolase ACTT2, the enoyl-CoA hydratases ACTT3 and ACTT6, and the acyl-CoA synthetase ACTT5 are all involved in the biosynthesis of the AK-, AF- and ACT-toxin common 9,10-epoxy-8-hydroxy-9-methyl-decatrienoic acid (EDA) structural moiety. The exact role of each enzyme, and of additional enzymes identified within the AF-toxin clusters have still to be determined. On the other hand, ACTTS1 to ACTTS4 are specific to the tangerine pathotype. The function of ACTTS3 is to elongate the polyketide chain portion of ACT-toxin that is unique to this toxin. The enoyl-reductase ACTTS2 might complement the missing enoyl-reductase (ER) domain in ACTTS3 in the synthesis of the polyketide portion of ACT-toxin. The roles of the nonribosomal peptide synthetases-related proteins ACTTS1 and ACTTS4 have also still not been elucidated. The chain is Acyl-CoA synthetase ACTT5 from Alternaria alternata (Alternaria rot fungus).